Here is a 59-residue protein sequence, read N- to C-terminus: Potassium channel toxin alpha-KTx 15.5 (59 aa).

The N-terminal stretch at 1–22 (MKFSSIILLTLLICSMSIFGNC) is a signal peptide. Gln-23 carries the post-translational modification Pyrrolidone carboxylic acid. 3 disulfide bridges follow: Cys-30–Cys-50, Cys-35–Cys-55, and Cys-39–Cys-57.

This sequence belongs to the short scorpion toxin superfamily. Potassium channel inhibitor family. Alpha-KTx 15 subfamily. As to expression, expressed by the venom gland.

The protein localises to the secreted. In terms of biological role, blocker of A-type voltage-gated potassium channels of cerebellar granular cells. May also inhibit Kv4/KCND when coexpressed with DPP6 or DPP10. The occlusion of the outer entry of the K(+) conducting pore is partially reversible and affects both open and closed channels. It shares the same target in rat brain than BmTX3 (AC Q8I0L5) and AmmTX3 (AC P60208). This is Potassium channel toxin alpha-KTx 15.5 from Androctonus australis (Sahara scorpion).